The primary structure comprises 438 residues: Aspartate aminotransferase, cytoplasmic (438 aa).

Positions 73, 167, and 220 each coordinate L-aspartate. Residue K284 is modified to N6-(pyridoxal phosphate)lysine. R412 serves as a coordination point for L-aspartate.

The protein belongs to the class-I pyridoxal-phosphate-dependent aminotransferase family. Homodimer. The cofactor is pyridoxal 5'-phosphate.

It is found in the cytoplasm. The catalysed reaction is L-aspartate + 2-oxoglutarate = oxaloacetate + L-glutamate. Plays a key role in amino acid metabolism. In Dictyostelium discoideum (Social amoeba), this protein is Aspartate aminotransferase, cytoplasmic (aatB).